Reading from the N-terminus, the 421-residue chain is UDP-N-acetylglucosamine 1-carboxyvinyltransferase (421 aa).

22–23 (KN) is a binding site for phosphoenolpyruvate. Residue Arg-94 coordinates UDP-N-acetyl-alpha-D-glucosamine. Residue Cys-118 is the Proton donor of the active site. Residue Cys-118 is modified to 2-(S-cysteinyl)pyruvic acid O-phosphothioketal. UDP-N-acetyl-alpha-D-glucosamine is bound by residues 123–127 (RPMDL), Asp-308, and Ile-330.

The protein belongs to the EPSP synthase family. MurA subfamily.

The protein localises to the cytoplasm. It carries out the reaction phosphoenolpyruvate + UDP-N-acetyl-alpha-D-glucosamine = UDP-N-acetyl-3-O-(1-carboxyvinyl)-alpha-D-glucosamine + phosphate. It functions in the pathway cell wall biogenesis; peptidoglycan biosynthesis. Cell wall formation. Adds enolpyruvyl to UDP-N-acetylglucosamine. The protein is UDP-N-acetylglucosamine 1-carboxyvinyltransferase of Ruegeria pomeroyi (strain ATCC 700808 / DSM 15171 / DSS-3) (Silicibacter pomeroyi).